A 375-amino-acid polypeptide reads, in one-letter code: Trichodiene synthase (375 aa).

This sequence belongs to the trichodiene synthase family.

The enzyme catalyses (2E,6E)-farnesyl diphosphate = trichodiene + diphosphate. Its pathway is sesquiterpene biosynthesis; trichothecene biosynthesis. Functionally, TS is a member of the terpene cyclase group of enzymes. It catalyzes the isomerization and cyclization of farnesyl pyro-phosphate to form trichodiene, the first cyclic intermediate in the biosynthetic pathway for trichothecenes. It serves to branch trichothecene biosynthesis from the isoprenoid pathway. The sequence is that of Trichodiene synthase (TRI5) from Gibberella zeae (strain ATCC MYA-4620 / CBS 123657 / FGSC 9075 / NRRL 31084 / PH-1) (Wheat head blight fungus).